The sequence spans 213 residues: Serine acetyltransferase (213 aa).

It belongs to the transferase hexapeptide repeat family.

The protein localises to the cytoplasm. It carries out the reaction L-serine + acetyl-CoA = O-acetyl-L-serine + CoA. The protein operates within amino-acid biosynthesis; L-cysteine biosynthesis; L-cysteine from L-serine: step 1/2. The protein is Serine acetyltransferase (cysE) of Staphylococcus aureus (strain COL).